The primary structure comprises 82 residues: Cortexin-1 (82 aa).

The tract at residues 1 to 20 (MSSAWTLSPEPLPPSTGPPV) is disordered. The chain crosses the membrane as a helical span at residues 30-50 (TVFAFVLCLLVVLVLLMVRCV).

This sequence belongs to the cortexin family.

It is found in the membrane. In terms of biological role, may mediate extracellular or intracellular signaling of cortical neurons during forebrain development. The polypeptide is Cortexin-1 (Ctxn1) (Mus musculus (Mouse)).